The following is a 104-amino-acid chain: L-rhamnose mutarotase (104 aa).

Tyr18 lines the substrate pocket. His22 serves as the catalytic Proton donor. Substrate contacts are provided by residues Tyr41 and 76 to 77; that span reads WW.

This sequence belongs to the rhamnose mutarotase family. As to quaternary structure, homodimer.

Its subcellular location is the cytoplasm. The enzyme catalyses alpha-L-rhamnose = beta-L-rhamnose. Its pathway is carbohydrate metabolism; L-rhamnose metabolism. Involved in the anomeric conversion of L-rhamnose. The protein is L-rhamnose mutarotase of Burkholderia cenocepacia (strain HI2424).